The following is a 400-amino-acid chain: S-adenosylmethionine sensor upstream of mTORC1 (400 aa).

Arg-99, Gly-168, Asp-186, Asp-198, Phe-199, and Ser-240 together coordinate S-adenosyl-L-methionine.

Belongs to the BMT2/SAMTOR family. In terms of assembly, interacts with the GATOR1 complex; interaction is disrupted when samtor binds S-adenosyl-L-methionine. Interacts with the KICSTOR complex; interaction is disrupted when samtor binds S-adenosyl-L-methionine.

S-adenosyl-L-methionine-binding protein that acts as an inhibitor of mTORC1 signaling via interaction with the GATOR1 and KICSTOR complexes. Acts as a sensor of S-adenosyl-L-methionine to signal methionine sufficiency to mTORC1: in presence of methionine, binds S-adenosyl-L-methionine, leading to disrupt interaction with the GATOR1 and KICSTOR complexes and promote mTORC1 signaling. Upon methionine starvation, S-adenosyl-L-methionine levels are reduced, thereby promoting the association with GATOR1 and KICSTOR, leading to inhibit mTORC1 signaling. Probably also acts as a S-adenosyl-L-methionine-dependent methyltransferase. This chain is S-adenosylmethionine sensor upstream of mTORC1, found in Xenopus laevis (African clawed frog).